Consider the following 237-residue polypeptide: Ribonuclease PH (237 aa).

Residues Arg86 and 124-126 each bind phosphate; that span reads GTR.

The protein belongs to the RNase PH family. As to quaternary structure, homohexameric ring arranged as a trimer of dimers.

It catalyses the reaction tRNA(n+1) + phosphate = tRNA(n) + a ribonucleoside 5'-diphosphate. Functionally, phosphorolytic 3'-5' exoribonuclease that plays an important role in tRNA 3'-end maturation. Removes nucleotide residues following the 3'-CCA terminus of tRNAs; can also add nucleotides to the ends of RNA molecules by using nucleoside diphosphates as substrates, but this may not be physiologically important. Probably plays a role in initiation of 16S rRNA degradation (leading to ribosome degradation) during starvation. This chain is Ribonuclease PH, found in Xanthobacter autotrophicus (strain ATCC BAA-1158 / Py2).